A 509-amino-acid polypeptide reads, in one-letter code: Scavenger receptor class B member 1 (509 aa).

The Cytoplasmic segment spans residues 1 to 11 (MGNLSRARRVT). The chain crosses the membrane as a helical span at residues 12–32 (AALGFIGLLFAVLGIIMIVMV). Residues 33 to 440 (PSIIKQQVLK…YIQLVLMPKV (408 aa)) lie on the Extracellular side of the membrane. N-linked (GlcNAc...) asparagine glycans are attached at residues Asn-102, Asn-108, Asn-173, Asn-212, Asn-227, Asn-255, Asn-310, Asn-330, and Asn-383. A disulfide bridge links Cys-251 with Cys-384. The chain crosses the membrane as a helical span at residues 441–461 (LHYAQYVLLALGCVLLLIPII). Residues 462–509 (YQIRSQEKCYLFWISFKKGSKDKEAVQAYSEFLMTSAPKGTVLQEARL) lie on the Cytoplasmic side of the membrane.

This sequence belongs to the CD36 family. Post-translationally, N-glycosylated. The six cysteines of the extracellular domain are all involved in intramolecular disulfide bonds.

It is found in the cell membrane. The protein localises to the membrane. The protein resides in the caveola. Its function is as follows. Receptor for different ligands such as phospholipids, cholesterol ester, lipoproteins, phosphatidylserine and apoptotic cells. Receptor for HDL, mediating selective uptake of cholesteryl ether and HDL-dependent cholesterol efflux. Also facilitates the flux of free and esterified cholesterol between the cell surface and apoB-containing lipoproteins and modified lipoproteins, although less efficiently than HDL. May be involved in the phagocytosis of apoptotic cells, via its phosphatidylserine binding activity. This is Scavenger receptor class B member 1 (SCARB1) from Bos taurus (Bovine).